Reading from the N-terminus, the 371-residue chain is 4-hydroxybenzoate polyprenyltransferase, mitochondrial (371 aa).

The N-terminal 45 residues, 1 to 45 (MLGSCGAGLVRGLRAETQAWLWGTRGRSLALVHAARGLHAANWQP), are a transit peptide targeting the mitochondrion. The Mitochondrial matrix segment spans residues 46–83 (SPGQGPRGRPLSLSAAAVVNSAPRPLQPYLRLMRLDKP). The helical transmembrane segment at 84–104 (IGTWLLYLPCTWSIGLAADPG) threads the bilayer. The Mitochondrial intermembrane segment spans residues 105–108 (CLPD). Residues 109-129 (WYMLSLFGTGAVLMRGAGCTI) form a helical membrane-spanning segment. The Mitochondrial matrix portion of the chain corresponds to 130-171 (NDMWDRDYDKKVTRTASRPIAAGDISTFRSFVFLGGQLTLAL). The chain crosses the membrane as a helical span at residues 172 to 192 (GVLLCLNYYSIALGAASLLLV). Residues 193–200 (TTYPLMKR) are Mitochondrial intermembrane-facing. A helical transmembrane segment spans residues 201-221 (ITYWPQLALGLTFNWGALLGW). The Mitochondrial matrix portion of the chain corresponds to 222-231 (SAVKGSCDPS). Residues 232–252 (VCLPLYFSGIMWTLIYDTIYA) form a helical membrane-spanning segment. At 253 to 277 (HQDKKDDALIGLKSTALLFREDTKK) the chain is on the mitochondrial intermembrane side. Residues 278 to 298 (WLSGFSVAMLGALSLVGVNSG) form a helical membrane-spanning segment. Topologically, residues 299-300 (QT) are mitochondrial matrix. A helical transmembrane segment spans residues 301–321 (MPYYTALAAVGAHLAHQIYTL). At 322–332 (DINRPEDCWEK) the chain is on the mitochondrial intermembrane side. A helical membrane pass occupies residues 333–353 (FTSNRTIGLIIFLGIVLGNLC). The Mitochondrial matrix portion of the chain corresponds to 354 to 371 (KAKETDKTRKNIENRMEN).

The protein belongs to the UbiA prenyltransferase family. Requires Mg(2+) as cofactor.

It is found in the mitochondrion inner membrane. The catalysed reaction is an all-trans-polyprenyl diphosphate + 4-hydroxybenzoate = a 4-hydroxy-3-(all-trans-polyprenyl)benzoate + diphosphate. It catalyses the reaction all-trans-decaprenyl diphosphate + 4-hydroxybenzoate = 4-hydroxy-3-(all-trans-decaprenyl)benzoate + diphosphate. It carries out the reaction all-trans-nonaprenyl diphosphate + 4-hydroxybenzoate = 4-hydroxy-3-(all-trans-nonaprenyl)benzoate + diphosphate. Its pathway is cofactor biosynthesis; ubiquinone biosynthesis. Its function is as follows. Mediates the second step in the final reaction sequence of coenzyme Q (CoQ) biosynthesis. Catalyzes the prenylation of para-hydroxybenzoate (PHB) with an all-trans polyprenyl donor (such as all-trans-decaprenyl diphosphate). The length of the polyprenyl side chain varies depending on the species, in humans, the side chain is comprised of 10 isoprenyls (decaprenyl) producing CoQ10 (also known as ubiquinone), whereas rodents predominantly generate CoQ9. However, this specificity is not complete, human tissues have low amounts of CoQ9 and rodent organs contain some CoQ10. Plays a central role in the biosynthesis of CoQ10. CoQ10 is a vital molecule that transports electrons from mitochondrial respiratory chain complexes. CoQs also function as cofactors for uncoupling protein and play a role as regulators of the extracellularly-induced ceramide-dependent apoptotic pathway. Regulates mitochondrial permeability transition pore (mPTP) opening and ROS production (pivotal events in cell death) in a tissue specific manner. The chain is 4-hydroxybenzoate polyprenyltransferase, mitochondrial from Bos taurus (Bovine).